The following is a 914-amino-acid chain: Translation initiation factor IF-2 (914 aa).

Disordered stretches follow at residues 52-84 (GGGK…VKAP) and 98-326 (AGGN…GVRL). Residues 57 to 68 (AEGAAKAPAKAA) are compositionally biased toward low complexity. Positions 69-84 (AKGDAKTAAKGDVKAP) are enriched in basic and acidic residues. Low complexity predominate over residues 98–138 (AGGNGEAAAPPAQPGGTATTPAAQATPEAPARPGPAAARPS). 2 stretches are compositionally biased toward pro residues: residues 139-169 (APAP…PAPK) and 193-207 (PRPV…PGAP). Residues 236–296 (RPGGGRPGGP…GAAGAFGRPG (61 aa)) show a composition bias toward gly residues. Residues 300–309 (RRGRKSKRQK) are compositionally biased toward basic residues. In terms of domain architecture, tr-type G spans 421–581 (TRPPVVTVMG…AVLLTADAAL (161 aa)). GTP is bound by residues 430-437 (GHVDHGKT), 469-473 (DTPGH), and 523-526 (NKID).

Belongs to the TRAFAC class translation factor GTPase superfamily. Classic translation factor GTPase family. IF-2 subfamily.

Its subcellular location is the cytoplasm. One of the essential components for the initiation of protein synthesis. Protects formylmethionyl-tRNA from spontaneous hydrolysis and promotes its binding to the 30S ribosomal subunits. Also involved in the hydrolysis of GTP during the formation of the 70S ribosomal complex. The protein is Translation initiation factor IF-2 of Mycobacterium avium (strain 104).